A 903-amino-acid chain; its full sequence is Translation initiation factor IF-2 (903 aa).

2 disordered regions span residues 57-171 and 267-318; these read EKFK…QRRR and PTPQ…EAVT. Residues 69–163 are compositionally biased toward basic and acidic residues; sequence KKEAKEPSEK…SEPQKPKESL (95 aa). Positions 267–278 are enriched in low complexity; that stretch reads PTPQPMQKTKQP. Residues 299 to 308 are compositionally biased toward basic residues; sequence RRARKKHKKP. The tr-type G domain maps to 402–569; the sequence is PRAPVITIMG…IVLLQAEILE (168 aa). The tract at residues 411–418 is G1; it reads GHVDHGKT. 411 to 418 lines the GTP pocket; it reads GHVDHGKT. The interval 436–440 is G2; the sequence is GITQH. Positions 457 to 460 are G3; that stretch reads DTPG. GTP contacts are provided by residues 457–461 and 511–514; these read DTPGH and NKMD. The tract at residues 511 to 514 is G4; that stretch reads NKMD. Positions 547–549 are G5; it reads SAK.

The protein belongs to the TRAFAC class translation factor GTPase superfamily. Classic translation factor GTPase family. IF-2 subfamily.

The protein localises to the cytoplasm. In terms of biological role, one of the essential components for the initiation of protein synthesis. Protects formylmethionyl-tRNA from spontaneous hydrolysis and promotes its binding to the 30S ribosomal subunits. Also involved in the hydrolysis of GTP during the formation of the 70S ribosomal complex. The sequence is that of Translation initiation factor IF-2 from Campylobacter curvus (strain 525.92).